A 345-amino-acid polypeptide reads, in one-letter code: Probable galacturonosyltransferase-like 3 (345 aa).

Topologically, residues methionine 1–arginine 7 are cytoplasmic. A helical; Signal-anchor for type II membrane protein membrane pass occupies residues leucine 8–leucine 28. At proline 29–serine 345 the chain is on the lumenal side. Residue asparagine 197 is glycosylated (N-linked (GlcNAc...) asparagine).

Belongs to the glycosyltransferase 8 family.

The protein resides in the golgi apparatus membrane. The protein operates within glycan metabolism; pectin biosynthesis. Its function is as follows. May be involved in pectin and/or xylans biosynthesis in cell walls. This Arabidopsis thaliana (Mouse-ear cress) protein is Probable galacturonosyltransferase-like 3 (GATL3).